Consider the following 309-residue polypeptide: Porphobilinogen deaminase (309 aa).

Residue Cys-240 is modified to S-(dipyrrolylmethanemethyl)cysteine.

This sequence belongs to the HMBS family. Monomer. Requires dipyrromethane as cofactor.

The catalysed reaction is 4 porphobilinogen + H2O = hydroxymethylbilane + 4 NH4(+). It functions in the pathway porphyrin-containing compound metabolism; protoporphyrin-IX biosynthesis; coproporphyrinogen-III from 5-aminolevulinate: step 2/4. In terms of biological role, tetrapolymerization of the monopyrrole PBG into the hydroxymethylbilane pre-uroporphyrinogen in several discrete steps. This is Porphobilinogen deaminase from Lawsonia intracellularis (strain PHE/MN1-00).